A 241-amino-acid polypeptide reads, in one-letter code: MIDLSGQTALITGASGGIGGAIARQLHKLGSHVIISGSNEEKLKALGNDLKDNYTIKVCNLTNTEECSNLVAQIEKLDILVCNAGITKDTLAIRMKNEDFDQVIDINLKANFILNREAIKKMMTNRYGRIINITSIVGVSGNPGQANYCASKAGLIGMTKSLAYEVATRGITVNAVAPGFIKSDMTDKLNDEQKEAITRKIPKGTYGMPEDIANAVAFLASKQSSYITGQTLHVNGGMLMV.

Residues 13–16 (GASG), S38, 57–58 (KV), and N83 contribute to the NADP(+) site. S135 lines the substrate pocket. Y148 functions as the Proton acceptor in the catalytic mechanism. Residues 148–152 (YCASK) and I181 each bind NADP(+).

Belongs to the short-chain dehydrogenases/reductases (SDR) family. Homotetramer.

The enzyme catalyses a (3R)-hydroxyacyl-[ACP] + NADP(+) = a 3-oxoacyl-[ACP] + NADPH + H(+). It functions in the pathway lipid metabolism; fatty acid biosynthesis. Its function is as follows. Catalyzes the NADPH-dependent reduction of beta-ketoacyl-ACP substrates to beta-hydroxyacyl-ACP products, the first reductive step in the elongation cycle of fatty acid biosynthesis. The chain is 3-oxoacyl-[acyl-carrier-protein] reductase FabG (fabG) from Rickettsia bellii (strain RML369-C).